Consider the following 159-residue polypeptide: Nucleotide-binding protein PSPTO_4393 (159 aa).

The protein belongs to the YajQ family.

In terms of biological role, nucleotide-binding protein. The protein is Nucleotide-binding protein PSPTO_4393 of Pseudomonas syringae pv. tomato (strain ATCC BAA-871 / DC3000).